We begin with the raw amino-acid sequence, 286 residues long: Bifunctional protein FolD (286 aa).

Residues 166–168 (GRS), Ser191, and Ile232 contribute to the NADP(+) site.

This sequence belongs to the tetrahydrofolate dehydrogenase/cyclohydrolase family. As to quaternary structure, homodimer.

The enzyme catalyses (6R)-5,10-methylene-5,6,7,8-tetrahydrofolate + NADP(+) = (6R)-5,10-methenyltetrahydrofolate + NADPH. The catalysed reaction is (6R)-5,10-methenyltetrahydrofolate + H2O = (6R)-10-formyltetrahydrofolate + H(+). It functions in the pathway one-carbon metabolism; tetrahydrofolate interconversion. Catalyzes the oxidation of 5,10-methylenetetrahydrofolate to 5,10-methenyltetrahydrofolate and then the hydrolysis of 5,10-methenyltetrahydrofolate to 10-formyltetrahydrofolate. This is Bifunctional protein FolD from Herpetosiphon aurantiacus (strain ATCC 23779 / DSM 785 / 114-95).